Consider the following 341-residue polypeptide: Ribulose-5-phosphate reductase 2 (341 aa).

Zn(2+) contacts are provided by Cys-38, His-64, Glu-65, and Glu-144.

Belongs to the zinc-containing alcohol dehydrogenase family. Heterodimer together with TarI. The cofactor is Zn(2+).

It carries out the reaction D-ribitol 5-phosphate + NADP(+) = D-ribulose 5-phosphate + NADPH + H(+). It participates in cell wall biogenesis; poly(ribitol phosphate) teichoic acid biosynthesis. In terms of biological role, catalyzes the NADPH dependent reduction of D-ribulose 5-phosphate to D-ribitol 5-phosphate. The polypeptide is Ribulose-5-phosphate reductase 2 (Staphylococcus aureus (strain NCTC 8325 / PS 47)).